The sequence spans 88 residues: UPF0297 protein SAK_2030 (88 aa).

The protein belongs to the UPF0297 family.

The protein is UPF0297 protein SAK_2030 of Streptococcus agalactiae serotype Ia (strain ATCC 27591 / A909 / CDC SS700).